Consider the following 145-residue polypeptide: 3-hydroxyacyl-[acyl-carrier-protein] dehydratase FabZ (145 aa).

His-49 is a catalytic residue.

It belongs to the thioester dehydratase family. FabZ subfamily.

Its subcellular location is the cytoplasm. The catalysed reaction is a (3R)-hydroxyacyl-[ACP] = a (2E)-enoyl-[ACP] + H2O. In terms of biological role, involved in unsaturated fatty acids biosynthesis. Catalyzes the dehydration of short chain beta-hydroxyacyl-ACPs and long chain saturated and unsaturated beta-hydroxyacyl-ACPs. The protein is 3-hydroxyacyl-[acyl-carrier-protein] dehydratase FabZ of Ehrlichia ruminantium (strain Welgevonden).